The following is a 383-amino-acid chain: tRNA-specific 2-thiouridylase MnmA (383 aa).

ATP contacts are provided by residues 30-37 (GMSGGVDS) and Met-56. The interaction with target base in tRNA stretch occupies residues 116-118 (NPD). The Nucleophile role is filled by Cys-121. Cys-121 and Cys-218 are joined by a disulfide. ATP is bound at residue Gly-146. The interaction with tRNA stretch occupies residues 168–170 (KDQ). Cys-218 functions as the Cysteine persulfide intermediate in the catalytic mechanism. Positions 330 to 331 (RY) are interaction with tRNA.

This sequence belongs to the MnmA/TRMU family.

It localises to the cytoplasm. It carries out the reaction S-sulfanyl-L-cysteinyl-[protein] + uridine(34) in tRNA + AH2 + ATP = 2-thiouridine(34) in tRNA + L-cysteinyl-[protein] + A + AMP + diphosphate + H(+). Functionally, catalyzes the 2-thiolation of uridine at the wobble position (U34) of tRNA, leading to the formation of s(2)U34. This Haemophilus influenzae (strain 86-028NP) protein is tRNA-specific 2-thiouridylase MnmA.